The sequence spans 1064 residues: Lysine-specific demethylase 4A (1064 aa).

Ala2 carries the post-translational modification N-acetylalanine. One can recognise a JmjN domain in the interval 14 to 56 (IMTFYPTMEEFRNFSRYIAYIESQGAHRAGLAKVVPPKEWKPR). Tyr132 serves as a coordination point for 2-oxoglutarate. The 167-residue stretch at 142 to 308 (EKHVDEWNIG…YGKQAVLCSC (167 aa)) folds into the JmjC domain. The Fe cation site is built by His188 and Glu190. 2-oxoglutarate contacts are provided by Asn198 and Lys206. Zn(2+) is bound by residues Cys234 and His240. Lys241 contributes to the 2-oxoglutarate binding site. His276 is a Fe cation binding site. Zn(2+) contacts are provided by Cys306 and Cys308. Disordered stretches follow at residues 358-384 (ELPP…EEGD), 501-537 (FSGS…RAQG), and 616-642 (SDDE…PLSQ). Acidic residues predominate over residues 366 to 382 (EEECPEDDMEGVEDGEE). Over residues 509-532 (SSSLGSGSSRDSVSSDSETSEPLS) the composition is skewed to low complexity. Position 523 is a phosphoserine (Ser523). Residues 597–638 (RQPLSKLPRHHPLVLQECVSDDETSEQLTPEEEAEETEAWAK) form an interaction with NCOR1 region. The segment covering 616-634 (SDDETSEQLTPEEEAEETE) has biased composition (acidic residues). The segment at 709-767 (MCFTSTGCGTDINLSTPYLEEDGTSILVSCKKCSVRVHASCYGVPPAKASEDWMCSRCS) adopts a PHD-type 1 zinc-finger fold. The segment at 772–805 (EEDCCLCSLRGGALQRANDDRWVHVSCAVAILEA) adopts a C2HC pre-PHD-type zinc-finger fold. The segment at 828–885 (LKCIFCKKRRKRTAGCCVQCSHGRCPTAFHVSCAQAAGVMMQPDDWPFVVFITCFRHK) adopts a PHD-type 2 zinc-finger fold. Tudor domains follow at residues 897–954 (QSIT…CLQF) and 955–1011 (GPPA…EELP).

This sequence belongs to the JHDM3 histone demethylase family. In terms of assembly, interacts with histone deacetylase proteins HDAC1, HDAC2 and HDAC3. Interacts with RB and NCOR1. Interacts with VRK1. It depends on Fe(2+) as a cofactor. Post-translationally, ubiquitinated by RNF8 and RNF168, leading to its degradation. Degradation promotes accessibility of H4K20me2 mark for DNA repair protein TP53BP1, which is then recruited. Also ubiquitinated by the SCF(FBXO22) complex; leading to proteasomal degradation.

It localises to the nucleus. It catalyses the reaction N(6),N(6),N(6)-trimethyl-L-lysyl(9)-[histone H3] + 2 2-oxoglutarate + 2 O2 = N(6)-methyl-L-lysyl(9)-[histone H3] + 2 formaldehyde + 2 succinate + 2 CO2. It carries out the reaction N(6),N(6),N(6)-trimethyl-L-lysyl(36)-[histone H3] + 2 2-oxoglutarate + 2 O2 = N(6)-methyl-L-lysyl(36)-[histone H3] + 2 formaldehyde + 2 succinate + 2 CO2. Its function is as follows. Histone demethylase that specifically demethylates 'Lys-9' and 'Lys-36' residues of histone H3, thereby playing a central role in histone code. Does not demethylate histone H3 'Lys-4', H3 'Lys-27' nor H4 'Lys-20'. Demethylates trimethylated H3 'Lys-9' and H3 'Lys-36' residue, while it has no activity on mono- and dimethylated residues. Demethylation of Lys residue generates formaldehyde and succinate. Participates in transcriptional repression of ASCL2 and E2F-responsive promoters via the recruitment of histone deacetylases and NCOR1, respectively. The sequence is that of Lysine-specific demethylase 4A (KDM4A) from Pongo abelii (Sumatran orangutan).